The chain runs to 117 residues: Large ribosomal subunit protein bL19 (117 aa).

The protein belongs to the bacterial ribosomal protein bL19 family.

Functionally, this protein is located at the 30S-50S ribosomal subunit interface and may play a role in the structure and function of the aminoacyl-tRNA binding site. The protein is Large ribosomal subunit protein bL19 of Vibrio parahaemolyticus serotype O3:K6 (strain RIMD 2210633).